The chain runs to 665 residues: ATPase WRNIP1 (665 aa).

A UBZ4-type zinc finger spans residues Q17 to P44. Residues C20, C23, H31, H35, and C39 each coordinate Zn(2+). Residues A48 to D190 form a disordered region. Phosphoserine is present on residues S65 and S75. Polar residues predominate over residues E76–A89. Residue K81 forms a Glycyl lysine isopeptide (Lys-Gly) (interchain with G-Cter in ubiquitin) linkage. T85 is modified (phosphothreonine). A phosphoserine mark is found at S91 and S92. Residues S92–E104 show a composition bias toward acidic residues. The residue at position 116 (T116) is a Phosphothreonine. Residues R130 to R155 show a composition bias toward low complexity. A Phosphoserine modification is found at S139. K141 is covalently cross-linked (Glycyl lysine isopeptide (Lys-Gly) (interchain with G-Cter in ubiquitin)). The residue at position 153 (S153) is a Phosphoserine. The span at E159–D184 shows a compositional bias: acidic residues. K225 participates in a covalent cross-link: Glycyl lysine isopeptide (Lys-Gly) (interchain with G-Cter in ubiquitin). P270–T276 serves as a coordination point for ATP. Residues K301, K310, K316, K322, and K335 each participate in a glycyl lysine isopeptide (Lys-Gly) (interchain with G-Cter in ubiquitin) cross-link. A Glycyl lysine isopeptide (Lys-Gly) (interchain with G-Cter in SUMO2); alternate cross-link involves residue K482. Residue K482 forms a Glycyl lysine isopeptide (Lys-Gly) (interchain with G-Cter in ubiquitin); alternate linkage. A phosphotyrosine mark is found at Y534 and Y562. A Glycyl lysine isopeptide (Lys-Gly) (interchain with G-Cter in ubiquitin) cross-link involves residue K627. Residue K633 forms a Glycyl lysine isopeptide (Lys-Gly) (interchain with G-Cter in ubiquitin); alternate linkage. K633 is subject to N6-acetyllysine; alternate. K636 participates in a covalent cross-link: Glycyl lysine isopeptide (Lys-Gly) (interchain with G-Cter in ubiquitin).

Belongs to the AAA ATPase family. RarA/MGS1/WRNIP1 subfamily. In terms of assembly, forms homooligomers, possibly octamers. Directly interacts with POLD1, POLD2 and POLD4. Interacts with the N-terminal domain of WRN. Interacts (via UBZ4-type zinc finger) with monoubiquitin and polyubiquitin. Interacts with TRIM14 and PPP6C; these interactions positively regulate the RIGI signaling pathway. In terms of processing, sumoylated with SUMO1 and SUMO2/3. Ubiquitously expressed.

It is found in the nucleus. The protein localises to the cytoplasm. The enzyme catalyses ATP + H2O = ADP + phosphate + H(+). Functions as a modulator of initiation or reinitiation events during DNA polymerase delta-mediated DNA synthesis. In the presence of ATP, stimulation of DNA polymerase delta-mediated DNA synthesis is decreased. Also plays a role in the innate immune defense against viruses. Stabilizes the RIGI dsRNA interaction and promotes RIGI 'Lys-63'-linked polyubiquitination. In turn, RIGI transmits the signal through mitochondrial MAVS. The sequence is that of ATPase WRNIP1 from Homo sapiens (Human).